Here is a 95-residue protein sequence, read N- to C-terminus: DASH complex subunit DAD3 (95 aa).

The protein belongs to the DASH complex DAD3 family. In terms of assembly, component of the DASH complex consisting of ASK1, DAD1, DAD2, DAD3, DAD4, DAM1, DUO1, HSK3, SPC19 and SPC34, with a stoichiometry of one copy of each subunit per complex. Multiple DASH complexes oligomerize to form a ring that encircles spindle microtubules and organizes the rod-like NDC80 complexes of the outer kinetochore. DASH complex oligomerization strengthens microtubule attachments. On cytoplasmic microtubules, DASH complexes appear to form patches instead of rings.

Its subcellular location is the chromosome. It localises to the centromere. The protein localises to the kinetochore. The protein resides in the cytoplasm. It is found in the cytoskeleton. Its subcellular location is the spindle. It localises to the nucleus. Its function is as follows. Component of the DASH complex that connects microtubules with kinetochores and couples microtubule depolymerisation to chromosome movement; it is involved in retrieving kinetochores to the spindle poles before their re-orientation on the spindle in early mitosis and allows microtubule depolymerization to pull chromosomes apart and resist detachment during anaphase. Kinetochores, consisting of a centromere-associated inner segment and a microtubule-contacting outer segment, play a crucial role in chromosome segregation by mediating the physical connection between centromeric DNA and microtubules. Kinetochores also serve as an input point for the spindle assembly checkpoint, which delays anaphase until all chromosomes have bioriented on the mitotic spindle. The chain is DASH complex subunit DAD3 from Chaetomium thermophilum (strain DSM 1495 / CBS 144.50 / IMI 039719) (Thermochaetoides thermophila).